The following is a 788-amino-acid chain: Multifunctional tryptophan biosynthesis protein (788 aa).

A Glutamine amidotransferase type-1 domain is found at 12–207 (DILMIDNFDS…MKLKGGTWEE (196 aa)). 63 to 65 (GPG) contacts L-glutamine. Cys91 acts as the Nucleophile; for GATase activity in catalysis. 141–142 (SL) contacts L-glutamine. Residues His181 and Glu183 each act as for GATase activity in the active site. Residues 238–503 (ILEKICAQRQ…DTRAFIRQLL (266 aa)) form an indole-3-glycerol phosphate synthase region. The interval 520-788 (LSRSCGIRTE…RAFVKAAKKL (269 aa)) is N-(5'-phosphoribosyl)anthranilate isomerase.

It carries out the reaction N-(5-phospho-beta-D-ribosyl)anthranilate = 1-(2-carboxyphenylamino)-1-deoxy-D-ribulose 5-phosphate. It catalyses the reaction 1-(2-carboxyphenylamino)-1-deoxy-D-ribulose 5-phosphate + H(+) = (1S,2R)-1-C-(indol-3-yl)glycerol 3-phosphate + CO2 + H2O. The catalysed reaction is chorismate + L-glutamine = anthranilate + pyruvate + L-glutamate + H(+). It participates in amino-acid biosynthesis; L-tryptophan biosynthesis; L-tryptophan from chorismate: step 1/5. The protein operates within amino-acid biosynthesis; L-tryptophan biosynthesis; L-tryptophan from chorismate: step 3/5. It functions in the pathway amino-acid biosynthesis; L-tryptophan biosynthesis; L-tryptophan from chorismate: step 4/5. Its function is as follows. Trifunctional enzyme bearing the Gln amidotransferase (GATase) domain of anthranilate synthase, indole-glycerolphosphate synthase, and phosphoribosylanthranilate isomerase activities. In Phanerodontia chrysosporium (White-rot fungus), this protein is Multifunctional tryptophan biosynthesis protein (TRPC).